We begin with the raw amino-acid sequence, 110 residues long: UPF0122 protein YlxM (110 aa).

It belongs to the UPF0122 family.

In terms of biological role, might take part in the signal recognition particle (SRP) pathway. This is inferred from the conservation of its genetic proximity to ftsY/ffh. May be a regulatory protein. The polypeptide is UPF0122 protein YlxM (ylxM) (Bacillus subtilis (strain 168)).